We begin with the raw amino-acid sequence, 689 residues long: Glycine--tRNA ligase beta subunit (689 aa).

This sequence belongs to the class-II aminoacyl-tRNA synthetase family. In terms of assembly, tetramer of two alpha and two beta subunits.

It localises to the cytoplasm. The catalysed reaction is tRNA(Gly) + glycine + ATP = glycyl-tRNA(Gly) + AMP + diphosphate. In Escherichia coli O127:H6 (strain E2348/69 / EPEC), this protein is Glycine--tRNA ligase beta subunit.